A 239-amino-acid polypeptide reads, in one-letter code: Tetraspanin-9 (239 aa).

The Cytoplasmic segment spans residues 1–13; the sequence is MARGCLCCVKYMM. Residues 14–34 traverse the membrane as a helical segment; that stretch reads FLFNLLFWLSGCGLLGVGIWL. Topologically, residues 35 to 55 are extracellular; that stretch reads SVSQGSFATFSPSFPSLSAAN. A helical membrane pass occupies residues 56-76; it reads LVITLGSVVMVTGFLGCLGAI. The Cytoplasmic portion of the chain corresponds to 77–85; sequence KENKCLLLS. The helical transmembrane segment at 86–106 threads the bilayer; sequence FFIVLLIILLAELILLILFFV. Topologically, residues 107 to 203 are extracellular; sequence YTEKVSENAK…VEEWLNDNKH (97 aa). A glycan (N-linked (GlcNAc...) asparagine) is linked at Asn180. The chain crosses the membrane as a helical span at residues 204–224; the sequence is LLGTIAMCVLVLQLLGMAFSM. The Cytoplasmic portion of the chain corresponds to 225–239; that stretch reads TLYQQIHRAGKKYDA.

It belongs to the tetraspanin (TM4SF) family.

It is found in the membrane. This is Tetraspanin-9 (tspan9) from Danio rerio (Zebrafish).